A 369-amino-acid chain; its full sequence is MPSQSPYHALSRYFSFPNRDHQAWWTGKGPLLGNMLADAGYPEQQQYQYLTLFNLHLIPALGPSESHGAGIDGAEWKSLLSGSGKLEFSMTYRKSAVSLRIAFEPTSLLAGTKKDVFNKRRTQQLLGDLERLDIDIDTVLYHPLFDTLVVSDEEEAALQNAGTVIPDSSRTQQLLALNLIEGNVRADLYVYPYVKALATGTASSTLLWAAVKKIDRYNRFRDALSILKGYFETYPSSTTNPMFLSSDLAAPRNAFCRLFFSETNFSWERVQHLWTLGGTLSDKPTLKGLELAKILWDILGISTAPASPDSFPLLFTFELRPEQPYLRQKLGIPVSGLTESAIANACVAFFERLGWDDHAASYRTNLSAY.

Glu-87 contacts substrate. Dimethylallyl diphosphate-binding residues include Arg-100 and Tyr-189. Residue Tyr-191 coordinates substrate.

It belongs to the tryptophan dimethylallyltransferase family.

Its function is as follows. Prenyltransferase; part of the gene cluster that mediates the biosynthesis of malbrancheamide, a dichlorinated fungal indole alkaloid that belongs to a family of natural products containing a characteristic bicyclo[2.2.2]diazaoctane core. The first step of malbrancheamide biosynthesis involves coupling of L-proline and L-tryptophan by malG, a bimodular NRPS, to produce L-Pro-L-Trp aldehyde through reductive offloading. This compound undergoes spontaneous cyclization and dehydration to give a dienamine which is reverse prenylated at C-2 by malE. The other prenyltransferase present in the cluster, malB, displays modest activity, suggesting that may be a redundant gene in the pathway. Subsequently, a [4+2] Diels-Alder cyclo-addition catalyzed by the bifunctional enzyme malC forms the characteristic bicyclo[2.2.2]diazaoctane ring of premalbrancheamid. Finally, the flavin-dependent halogenase malA catalyzes the iterative dichlorination of the indole ring of premalbrancheamide to yield C-9 monochlorinated malbrancheamide B, C-8 monochlorinated isomalbrancheamide B, and dichlorinated malbrancheamide. MalA is also able to brominate premalbrancheamide at C-9 to yield malbrancheamide C, and, to a lesser extend, at C-8 to yield isomalbrancheamide C. Finally, malA can brominate C-9 monochlorinated malbrancheamide B at C-8 to yield malbrancheamide D, or C-8 monochlorinated isomalbrancheamide B at C-9 to produce isomalbrancheamide D. The protein is Prenyltransferase malB of Malbranchea aurantiaca.